The sequence spans 539 residues: Membrane protein insertase YidC (539 aa).

Transmembrane regions (helical) follow at residues 6–26, 341–361, 416–436, 454–474, and 495–515; these read TLLV…WQVA, SVIQ…TFIV, LGGC…YWAL, LSAQ…MFLI, and PVMF…YWLV.

It belongs to the OXA1/ALB3/YidC family. Type 1 subfamily. In terms of assembly, interacts with the Sec translocase complex via SecD. Specifically interacts with transmembrane segments of nascent integral membrane proteins during membrane integration.

It is found in the cell inner membrane. Its function is as follows. Required for the insertion and/or proper folding and/or complex formation of integral membrane proteins into the membrane. Involved in integration of membrane proteins that insert both dependently and independently of the Sec translocase complex, as well as at least some lipoproteins. Aids folding of multispanning membrane proteins. The chain is Membrane protein insertase YidC from Vibrio vulnificus (strain CMCP6).